The following is a 127-amino-acid chain: PanD regulatory factor (127 aa).

Positions 1–127 constitute an N-acetyltransferase domain; sequence MKLTIIRLEK…TAQQGGWEKC (127 aa). Interaction with PanD stretches follow at residues 43–48 and 66–76; these read RFNERL and LRVREVTRRRG. CoA is bound by residues 66 to 68 and 72 to 79; these read LRV and TRRRGVGQ.

Belongs to the PanZ/PanM family. As to quaternary structure, interacts with PanD in the presence of CoA. Forms a heterooctameric complex composed of four PanD subunits and four PanZ subunits. Monomer in solution.

With respect to regulation, activation of PanD processing occurs even at low CoA concentrations. In contrast, full inhibition of PanD catalytic activity only occurs at sufficiently high CoA concentrations. In terms of biological role, controls both the activation and catalytic activity of PanD in a coenzyme A (CoA)-dependent fashion. Binding of CoA or a derivative to PanZ leads to interaction with PanD, which promotes the processing and activation of pro-PanD, and subsequent substrate-mediated inhibition of the active form of PanD. Inhibition of PanD activity is probably the primary metabolic role of PanZ, allowing negative feedback regulation of pantothenate biosynthesis by CoA. This Escherichia coli (strain K12) protein is PanD regulatory factor.